Consider the following 152-residue polypeptide: Large ribosomal subunit protein bL9 (152 aa).

Belongs to the bacterial ribosomal protein bL9 family.

Binds to the 23S rRNA. In Nostoc punctiforme (strain ATCC 29133 / PCC 73102), this protein is Large ribosomal subunit protein bL9.